The sequence spans 262 residues: Bacteriorhodopsin (262 aa).

Positions 1–13 are excised as a propeptide; that stretch reads MLELLPTAVEGVS. Q14 carries the post-translational modification Pyrrolidone carboxylic acid. At 14 to 22 the chain is on the extracellular side; sequence QAQITGRPE. Residues 23–42 traverse the membrane as a helical segment; it reads WIWLALGTALMGLGTLYFLV. The Cytoplasmic portion of the chain corresponds to 43 to 56; it reads KGMGVSDPDAKKFY. Residues 57–75 form a helical membrane-spanning segment; sequence AITTLVPAIAFTMYLSMLL. Residues 76 to 92 lie on the Extracellular side of the membrane; the sequence is GYGLTMVPFGGEQNPIY. Residues 93-109 form a helical membrane-spanning segment; the sequence is WARYADWLFTTPLLLLD. Residues 110-120 lie on the Cytoplasmic side of the membrane; that stretch reads LALLVDADQGT. Residues 121–140 form a helical membrane-spanning segment; sequence ILALVGADGIMIGTGLVGAL. Residues 141-147 lie on the Extracellular side of the membrane; sequence TKVYSYR. Residues 148 to 167 form a helical membrane-spanning segment; sequence FVWWAISTAAMLYILYVLFF. Topologically, residues 168 to 185 are cytoplasmic; sequence GFTSKAESMRPEVASTFK. A helical membrane pass occupies residues 186-204; that stretch reads VLRNVTVVLWSAYPVVWLI. Topologically, residues 205–216 are extracellular; that stretch reads GSEGAGIVPLNI. The helical transmembrane segment at 217 to 236 threads the bilayer; sequence ETLLFMVLDVSAKVGFGLIL. K229 bears the N6-(retinylidene)lysine mark. The Cytoplasmic portion of the chain corresponds to 237–262; the sequence is LRSRAIFGEAEAPEPSAGDGAAATSD.

Homotrimer. The covalent binding of retinal to the apoprotein, bacterioopsin, generates bacteriorhodopsin.

The protein resides in the cell membrane. Functionally, light-driven proton pump. The sequence is that of Bacteriorhodopsin (bop) from Halobacterium salinarum (strain ATCC 700922 / JCM 11081 / NRC-1) (Halobacterium halobium).